Consider the following 255-residue polypeptide: Triosephosphate isomerase (255 aa).

Substrate is bound at residue 9-11; it reads NWK. The Electrophile role is filled by His-95. Residue Glu-167 is the Proton acceptor of the active site. Substrate is bound by residues Gly-173, Ser-212, and 233–234; that span reads GG.

The protein belongs to the triosephosphate isomerase family. Homodimer.

Its subcellular location is the cytoplasm. The enzyme catalyses D-glyceraldehyde 3-phosphate = dihydroxyacetone phosphate. Its pathway is carbohydrate biosynthesis; gluconeogenesis. It participates in carbohydrate degradation; glycolysis; D-glyceraldehyde 3-phosphate from glycerone phosphate: step 1/1. Functionally, involved in the gluconeogenesis. Catalyzes stereospecifically the conversion of dihydroxyacetone phosphate (DHAP) to D-glyceraldehyde-3-phosphate (G3P). This chain is Triosephosphate isomerase, found in Erwinia tasmaniensis (strain DSM 17950 / CFBP 7177 / CIP 109463 / NCPPB 4357 / Et1/99).